Reading from the N-terminus, the 178-residue chain is SPNGLLQFPFPRGASWHVGGAHTNTGSGNYPMSSLDMSRGGGSNQNGNWVSASAAGGSFKRHSSCFAEIVHTGGWSTTYYHLMNIQYNTGANVSMNTAIANAPNTQAQALCNGGQSTGPHQHWSLKQNGSFYHLNGTYLSGYRITATGSSYDTNCSRFYLTKNGQNYCYGYYVNPGPN.

Residues Cys65 and Cys111 are joined by a disulfide bond. The Zn(2+) site is built by His120 and His122. Residues Cys155 and Cys168 are joined by a disulfide bond.

Belongs to the peptidase M23A family. The cofactor is Zn(2+).

The enzyme catalyses Cleavage of N-acetylmuramoyl-|-Ala, and of the insulin B chain at 23-Gly-|-Phe-24 &gt; 18-Val-|-Cys(SO3H).. The polypeptide is Beta-lytic metalloendopeptidase (Lysobacter enzymogenes).